The following is a 370-amino-acid chain: Protein Mut11 (370 aa).

The tract at residues 1-22 (MARGPGDTDMDEASADAAIPSS) is disordered. WD repeat units follow at residues 38-77 (GHTKAVAAVKFSPDGSLLASGSADRTVALWDAATGARVNT), 80-119 (GHSCGVSDVAWNPNGRYLATAADDHSLKLWDAETGACLRT), 122-162 (GHTN…CLRE), 165-204 (AHSDPVTSAAFSYDGSMVVTSSLDGLIRLWDTQTGHCLKT), 208-247 (RDSPPVSFAAFTPNAKYVLCNTLDGRAKLWDYAAGRTRRT), 262-301 (GFLGGSSSASFDLGCSMVVTGSEDGSLAAYDISTGHVVGR), and 329-370 (GHTA…PAAA).

The protein belongs to the WD repeat WDR5/wds family.

It localises to the nucleus. In terms of biological role, part of a complex involved in 'Lys-4' histone H3 methylation. The sequence is that of Protein Mut11 (Mut11) from Chlamydomonas reinhardtii (Chlamydomonas smithii).